The primary structure comprises 303 residues: UDP-3-O-acyl-N-acetylglucosamine deacetylase (303 aa).

The Zn(2+) site is built by His78, His237, and Asp241. The Proton donor role is filled by His264.

The protein belongs to the LpxC family. Requires Zn(2+) as cofactor.

It carries out the reaction a UDP-3-O-[(3R)-3-hydroxyacyl]-N-acetyl-alpha-D-glucosamine + H2O = a UDP-3-O-[(3R)-3-hydroxyacyl]-alpha-D-glucosamine + acetate. Its pathway is glycolipid biosynthesis; lipid IV(A) biosynthesis; lipid IV(A) from (3R)-3-hydroxytetradecanoyl-[acyl-carrier-protein] and UDP-N-acetyl-alpha-D-glucosamine: step 2/6. In terms of biological role, catalyzes the hydrolysis of UDP-3-O-myristoyl-N-acetylglucosamine to form UDP-3-O-myristoylglucosamine and acetate, the committed step in lipid A biosynthesis. The polypeptide is UDP-3-O-acyl-N-acetylglucosamine deacetylase (Pseudomonas putida (strain ATCC 700007 / DSM 6899 / JCM 31910 / BCRC 17059 / LMG 24140 / F1)).